The chain runs to 194 residues: Fe/S biogenesis protein NfuA (194 aa).

[4Fe-4S] cluster-binding residues include Cys151 and Cys154.

The protein belongs to the NfuA family. In terms of assembly, homodimer. It depends on [4Fe-4S] cluster as a cofactor.

Involved in iron-sulfur cluster biogenesis. Binds a 4Fe-4S cluster, can transfer this cluster to apoproteins, and thereby intervenes in the maturation of Fe/S proteins. Could also act as a scaffold/chaperone for damaged Fe/S proteins. In Actinobacillus succinogenes (strain ATCC 55618 / DSM 22257 / CCUG 43843 / 130Z), this protein is Fe/S biogenesis protein NfuA.